Consider the following 141-residue polypeptide: Hemoglobin subunit alpha-A (141 aa).

The 141-residue stretch at 1-141 (VLSAADKANV…VGAVLTAKYR (141 aa)) folds into the Globin domain. His58 contributes to the O2 binding site. His87 lines the heme b pocket.

The protein belongs to the globin family. Heterotetramer of two alpha chains and two beta chains. Red blood cells.

Functionally, involved in oxygen transport from the lung to the various peripheral tissues. The sequence is that of Hemoglobin subunit alpha-A (HBAA) from Chloephaga melanoptera (Andean goose).